A 299-amino-acid chain; its full sequence is Nitrogenase iron protein (299 aa).

8–15 (GKGGIGKS) lines the ATP pocket. Cys96 contacts [4Fe-4S] cluster. Residue Arg99 is modified to ADP-ribosylarginine; by dinitrogenase reductase ADP-ribosyltransferase. Cys130 contributes to the [4Fe-4S] cluster binding site.

It belongs to the NifH/BchL/ChlL family. As to quaternary structure, homodimer. [4Fe-4S] cluster serves as cofactor. The reversible ADP-ribosylation of Arg-99 inactivates the nitrogenase reductase and regulates nitrogenase activity.

It catalyses the reaction N2 + 8 reduced [2Fe-2S]-[ferredoxin] + 16 ATP + 16 H2O = H2 + 8 oxidized [2Fe-2S]-[ferredoxin] + 2 NH4(+) + 16 ADP + 16 phosphate + 6 H(+). Its function is as follows. The key enzymatic reactions in nitrogen fixation are catalyzed by the nitrogenase complex, which has 2 components: the iron protein and the molybdenum-iron protein. The sequence is that of Nitrogenase iron protein from Gloeothece citriformis (strain PCC 7424) (Cyanothece sp. (strain PCC 7424)).